The chain runs to 226 residues: Fibronectin type III domain-containing protein 10 (226 aa).

A signal peptide spans 1-20 (MRAPPLLLLLAACAPPPCAA). Residues 21–182 (AAPTPPGWEP…FTAEPAGMQD (162 aa)) are Extracellular-facing. One can recognise a Fibronectin type-III domain in the interval 74–166 (PAGRSLRASV…PAAAAPETPE (93 aa)). Asn-86 and Asn-109 each carry an N-linked (GlcNAc...) asparagine glycan. The helical transmembrane segment at 183–203 (IVVAMTAVGGSICVMLVVICL) threads the bilayer. Residues 204–226 (LVAYITENLMRPALARPGLRRHP) lie on the Cytoplasmic side of the membrane.

It localises to the membrane. This is Fibronectin type III domain-containing protein 10 (FNDC10) from Homo sapiens (Human).